A 312-amino-acid chain; its full sequence is Ribonuclease Z (312 aa).

Zn(2+) is bound by residues His62, His64, Asp66, His67, His144, Asp215, and His273. Asp66 (proton acceptor) is an active-site residue.

Belongs to the RNase Z family. Homodimer. Requires Zn(2+) as cofactor.

The enzyme catalyses Endonucleolytic cleavage of RNA, removing extra 3' nucleotides from tRNA precursor, generating 3' termini of tRNAs. A 3'-hydroxy group is left at the tRNA terminus and a 5'-phosphoryl group is left at the trailer molecule.. Zinc phosphodiesterase, which displays some tRNA 3'-processing endonuclease activity. Probably involved in tRNA maturation, by removing a 3'-trailer from precursor tRNA. This Prochlorococcus marinus (strain MIT 9215) protein is Ribonuclease Z.